Reading from the N-terminus, the 900-residue chain is Trehalose-phosphatase (900 aa).

2 disordered regions span residues S76–P109 and V874–N900. Basic and acidic residues predominate over residues K82 to D108.

It in the C-terminal section; belongs to the trehalose phosphatase family. In the N-terminal section; belongs to the glycosyltransferase 20 family. Mg(2+) serves as cofactor.

It carries out the reaction alpha,alpha-trehalose 6-phosphate + H2O = alpha,alpha-trehalose + phosphate. The protein operates within carbohydrate biosynthesis. In terms of biological role, phosphatase catalytic subunit of the trehalose synthase complex that catalyzes the production of trehalose from glucose-6-phosphate and UDP-alpha-D-glucose in a two step process. In Zygosaccharomyces rouxii, this protein is Trehalose-phosphatase.